A 318-amino-acid chain; its full sequence is Curved DNA-binding protein (318 aa).

The 65-residue stretch at aspartate 5–arginine 69 folds into the J domain. Residues glycine 111–glycine 130 form a disordered region.

The protein resides in the cytoplasm. It is found in the nucleoid. In terms of biological role, DNA-binding protein that preferentially recognizes a curved DNA sequence. It is probably a functional analog of DnaJ; displays overlapping activities with DnaJ, but functions under different conditions, probably acting as a molecular chaperone in an adaptive response to environmental stresses other than heat shock. Lacks autonomous chaperone activity; binds native substrates and targets them for recognition by DnaK. Its activity is inhibited by the binding of CbpM. In Pseudomonas putida (strain GB-1), this protein is Curved DNA-binding protein.